The sequence spans 256 residues: Ribonuclease 3 (256 aa).

An RNase III domain is found at 3-125 (LEALQQRLGY…IFGAVFLDGG (123 aa)). E38 lines the Mg(2+) pocket. D42 is an active-site residue. Positions 111 and 114 each coordinate Mg(2+). The active site involves E114. Residues 152–222 (DAKTLLQEYL…AKLALEEAHR (71 aa)) form the DRBM domain. The segment at 227-256 (LVKRSRAERTGKTRKQATPPDPQLSLRLKE) is disordered.

Belongs to the ribonuclease III family. As to quaternary structure, homodimer. Mg(2+) serves as cofactor.

It localises to the cytoplasm. The catalysed reaction is Endonucleolytic cleavage to 5'-phosphomonoester.. In terms of biological role, digests double-stranded RNA. Involved in the processing of primary rRNA transcript to yield the immediate precursors to the large and small rRNAs (23S and 16S). Processes some mRNAs, and tRNAs when they are encoded in the rRNA operon. Processes pre-crRNA and tracrRNA of type II CRISPR loci if present in the organism. This Ralstonia nicotianae (strain ATCC BAA-1114 / GMI1000) (Ralstonia solanacearum) protein is Ribonuclease 3.